Here is a 185-residue protein sequence, read N- to C-terminus: Ribosome-recycling factor (185 aa).

It belongs to the RRF family.

Its subcellular location is the cytoplasm. In terms of biological role, responsible for the release of ribosomes from messenger RNA at the termination of protein biosynthesis. May increase the efficiency of translation by recycling ribosomes from one round of translation to another. The protein is Ribosome-recycling factor of Streptococcus pneumoniae serotype 2 (strain D39 / NCTC 7466).